Reading from the N-terminus, the 177-residue chain is Large ribosomal subunit protein uL6 (177 aa).

Belongs to the universal ribosomal protein uL6 family. In terms of assembly, part of the 50S ribosomal subunit.

In terms of biological role, this protein binds to the 23S rRNA, and is important in its secondary structure. It is located near the subunit interface in the base of the L7/L12 stalk, and near the tRNA binding site of the peptidyltransferase center. The sequence is that of Large ribosomal subunit protein uL6 from Shewanella denitrificans (strain OS217 / ATCC BAA-1090 / DSM 15013).